The chain runs to 29 residues: uncharacterized protein (29 aa).

This is an uncharacterized protein from Haloarcula hispanica (His1V).